Consider the following 141-residue polypeptide: Ubiquitin-like protein ATG12 (141 aa).

Residues 24-54 form a disordered region; sequence LELSPETAIPEPPSSVAVSPGTEEPPGDTKK. Glycine 141 participates in a covalent cross-link: Glycyl lysine isopeptide (Gly-Lys) (interchain with K-? in acceptor protein).

This sequence belongs to the ATG12 family. In terms of assembly, forms a conjugate with ATG5. Part of the minor complex composed of 4 sets of ATG12-ATG5 and ATG16L1 (400 kDa); this complex interacts with ATG3 leading to disruption of ATG7 interaction and promotion of ATG8-like proteins lipidation. Forms an 800-kDa complex composed of ATG12-ATG5 and ATG16L2. Interacts with DHX58/RIG-1, IFIH1/MDA5 and MAVS/IPS-1 in monomeric form as well as in ATG12-ATG5 conjugate. The interaction with MAVS is further enhanced upon vesicular stomatitis virus (VSV) infection. Interacts with ATG3; this interaction is essential for phosphatidylethanolamine (PE)-conjugated ATG8-like proteins formation. Interacts with ATG7. Interacts with ATG10. The ATG12-ATG5 conjugate interacts with RAB33A; this interaction is bridged by ATG16L1 and promotes ATG12-ATG5-ATG16L1 complex recruitment to phagophores. Interacts with TECPR1. Interacts with SH3BGRL. The ATG12-ATG5 conjugate interacts with PDCD6IP (via the BRO1 domain); this interaction is bridged by ATG12 and promotes multiple PDCD6IP-mediated functions such as endolysosomal trafficking, macroautophagy and exosome biogenesis. In terms of processing, acetylated by EP300.

The protein localises to the cytoplasm. The protein resides in the preautophagosomal structure membrane. Functionally, ubiquitin-like protein involved in autophagy vesicles formation. Conjugation with ATG5 through a ubiquitin-like conjugating system involving also ATG7 as an E1-like activating enzyme and ATG10 as an E2-like conjugating enzyme, is essential for its function. The ATG12-ATG5 conjugate acts as an E3-like enzyme which is required for lipidation of ATG8 family proteins and their association to the vesicle membranes. The ATG12-ATG5 conjugate also negatively regulates the innate antiviral immune response by blocking the type I IFN production pathway through direct association with RARRES3 and MAVS. Also plays a role in translation or delivery of incoming viral RNA to the translation apparatus. As part of the ATG8 conjugation system with ATG5 and ATG16L1, required for recruitment of LRRK2 to stressed lysosomes and induction of LRRK2 kinase activity in response to lysosomal stress. The chain is Ubiquitin-like protein ATG12 from Rattus norvegicus (Rat).